The following is a 317-amino-acid chain: Acetyl-coenzyme A carboxylase carboxyl transferase subunit alpha (317 aa).

A CoA carboxyltransferase C-terminal domain is found at 39–293; that stretch reads KLEDKNRKLT…KDALGASLER (255 aa).

Belongs to the AccA family. As to quaternary structure, acetyl-CoA carboxylase is a heterohexamer composed of biotin carboxyl carrier protein (AccB), biotin carboxylase (AccC) and two subunits each of ACCase subunit alpha (AccA) and ACCase subunit beta (AccD).

The protein localises to the cytoplasm. It catalyses the reaction N(6)-carboxybiotinyl-L-lysyl-[protein] + acetyl-CoA = N(6)-biotinyl-L-lysyl-[protein] + malonyl-CoA. The protein operates within lipid metabolism; malonyl-CoA biosynthesis; malonyl-CoA from acetyl-CoA: step 1/1. In terms of biological role, component of the acetyl coenzyme A carboxylase (ACC) complex. First, biotin carboxylase catalyzes the carboxylation of biotin on its carrier protein (BCCP) and then the CO(2) group is transferred by the carboxyltransferase to acetyl-CoA to form malonyl-CoA. This Chromohalobacter salexigens (strain ATCC BAA-138 / DSM 3043 / CIP 106854 / NCIMB 13768 / 1H11) protein is Acetyl-coenzyme A carboxylase carboxyl transferase subunit alpha.